A 427-amino-acid chain; its full sequence is Enolase (427 aa).

Gln-163 is a binding site for (2R)-2-phosphoglycerate. The active-site Proton donor is Glu-205. Asp-242, Glu-285, and Asp-312 together coordinate Mg(2+). (2R)-2-phosphoglycerate is bound by residues Lys-337, Arg-366, Ser-367, and Lys-388. The active-site Proton acceptor is Lys-337.

The protein belongs to the enolase family. The cofactor is Mg(2+).

The protein localises to the cytoplasm. It is found in the secreted. The protein resides in the cell surface. The enzyme catalyses (2R)-2-phosphoglycerate = phosphoenolpyruvate + H2O. It participates in carbohydrate degradation; glycolysis; pyruvate from D-glyceraldehyde 3-phosphate: step 4/5. Functionally, catalyzes the reversible conversion of 2-phosphoglycerate (2-PG) into phosphoenolpyruvate (PEP). It is essential for the degradation of carbohydrates via glycolysis. The chain is Enolase from Burkholderia vietnamiensis (strain G4 / LMG 22486) (Burkholderia cepacia (strain R1808)).